The following is a 132-amino-acid chain: uncharacterized protein (132 aa).

A Glycyl lysine isopeptide (Lys-Gly) (interchain with G-Cter in SAMP2) cross-link involves residue lysine 59.

The protein belongs to the OsmC/Ohr family.

This is an uncharacterized protein from Haloferax volcanii (strain ATCC 29605 / DSM 3757 / JCM 8879 / NBRC 14742 / NCIMB 2012 / VKM B-1768 / DS2) (Halobacterium volcanii).